The primary structure comprises 422 residues: Enolase 2 (422 aa).

Residue glutamine 162 coordinates (2R)-2-phosphoglycerate. Glutamate 204 acts as the Proton donor in catalysis. The Mg(2+) site is built by aspartate 241, glutamate 285, and aspartate 312. Residues lysine 337, arginine 366, serine 367, and lysine 388 each coordinate (2R)-2-phosphoglycerate. Catalysis depends on lysine 337, which acts as the Proton acceptor.

The protein belongs to the enolase family. Mg(2+) serves as cofactor.

Its subcellular location is the cytoplasm. It localises to the secreted. The protein resides in the cell surface. It catalyses the reaction (2R)-2-phosphoglycerate = phosphoenolpyruvate + H2O. Its pathway is carbohydrate degradation; glycolysis; pyruvate from D-glyceraldehyde 3-phosphate: step 4/5. Catalyzes the reversible conversion of 2-phosphoglycerate (2-PG) into phosphoenolpyruvate (PEP). It is essential for the degradation of carbohydrates via glycolysis. The sequence is that of Enolase 2 from Lactococcus lactis subsp. lactis (strain IL1403) (Streptococcus lactis).